Reading from the N-terminus, the 290-residue chain is uncharacterized protein (290 aa).

3 disordered regions span residues Cys89–Ser157, Met172–Ser217, and Thr261–Lys290. 2 stretches are compositionally biased toward basic and acidic residues: residues Asp106–Pro124 and Lys142–Ser152. 2 stretches are compositionally biased toward polar residues: residues Met172–Gly183 and Lys193–Thr202. Low complexity-rich tracts occupy residues Met207 to Ser217 and Pro274 to Lys290.

This is an uncharacterized protein from Caenorhabditis elegans.